The following is a 556-amino-acid chain: Peptide chain release factor 3 (556 aa).

In terms of domain architecture, tr-type G spans 28-297 (QQRRNFAIIS…AFLDYALKPG (270 aa)). GTP-binding positions include 37–44 (SHPDAGKT), 105–109 (DTPGH), and 159–162 (NKMD).

The protein belongs to the TRAFAC class translation factor GTPase superfamily. Classic translation factor GTPase family. PrfC subfamily.

It is found in the cytoplasm. Its function is as follows. Increases the formation of ribosomal termination complexes and stimulates activities of RF-1 and RF-2. It binds guanine nucleotides and has strong preference for UGA stop codons. It may interact directly with the ribosome. The stimulation of RF-1 and RF-2 is significantly reduced by GTP and GDP, but not by GMP. The polypeptide is Peptide chain release factor 3 (Synechococcus elongatus (strain ATCC 33912 / PCC 7942 / FACHB-805) (Anacystis nidulans R2)).